A 438-amino-acid chain; its full sequence is UDP-N-acetylglucosamine 1-carboxyvinyltransferase (438 aa).

Lys-35 to Asn-36 is a binding site for phosphoenolpyruvate. Arg-105 lines the UDP-N-acetyl-alpha-D-glucosamine pocket. Cys-129 functions as the Proton donor in the catalytic mechanism. Residue Cys-129 is modified to 2-(S-cysteinyl)pyruvic acid O-phosphothioketal. UDP-N-acetyl-alpha-D-glucosamine is bound by residues Arg-134–Leu-138, Asp-321, and Val-343.

The protein belongs to the EPSP synthase family. MurA subfamily.

The protein localises to the cytoplasm. The catalysed reaction is phosphoenolpyruvate + UDP-N-acetyl-alpha-D-glucosamine = UDP-N-acetyl-3-O-(1-carboxyvinyl)-alpha-D-glucosamine + phosphate. Its pathway is cell wall biogenesis; peptidoglycan biosynthesis. Functionally, cell wall formation. Adds enolpyruvyl to UDP-N-acetylglucosamine. The polypeptide is UDP-N-acetylglucosamine 1-carboxyvinyltransferase (Synechocystis sp. (strain ATCC 27184 / PCC 6803 / Kazusa)).